The chain runs to 3092 residues: Inhibitory regulator protein IRA1 (3092 aa).

Disordered regions lie at residues 375-430 (HLHH…MASL) and 450-487 (LGQA…NSAN). Positions 379–400 (SSSSSKTTNTNSPNSISKTSIK) are enriched in low complexity. Residues 401–430 (QSSVNASGNVSPSQFSTGNDASPTSPMASL) are compositionally biased toward polar residues. The segment covering 455–487 (TSTSTTAATTKTDADTPSTMNTNNNNNNNNSAN) has biased composition (low complexity). Phosphoserine is present on residues Ser497 and Ser915. Disordered stretches follow at residues 946-988 (SGVP…VLSS) and 1003-1023 (TILK…ADDK). Residues 965-988 (QSPYSSPPQLQQSDLPSPLSVLSS) are compositionally biased toward low complexity. Ser1342 carries the phosphoserine modification. Residues 1725–1930 (NASHILVTEL…DKIFNFLSEL (206 aa)) enclose the Ras-GAP domain. Residues Ser1753 and Ser3004 each carry the phosphoserine; by PKA modification.

It localises to the cytoplasm. Its function is as follows. Inhibitory regulator of the Ras-cyclic AMP pathway in S.cerevisiae. Stimulates the GTPase activity of Ras proteins. The polypeptide is Inhibitory regulator protein IRA1 (IRA1) (Saccharomyces cerevisiae (strain ATCC 204508 / S288c) (Baker's yeast)).